The following is a 546-amino-acid chain: DDB1- and CUL4-associated factor 11 (546 aa).

A compositionally biased stretch (low complexity) spans 1–19 (MGSRNSSSAGSGSGDPSEG). Residues 1–40 (MGSRNSSSAGSGSGDPSEGLPRRGAGLRRSEEEEEEDEDV) form a disordered region. Leu-49 and Ser-75 each carry phosphoserine. WD repeat units follow at residues 170 to 210 (SYSQ…RKFK), 216 to 258 (DVGW…TALD), 263 to 302 (ERRF…RTLQ), 305 to 345 (SHED…EDDP), 353 to 392 (GHQD…SREG), 435 to 480 (GVLH…KKLT), and 481 to 520 (NHKA…YFQD). Positions 523–546 (PESEECASAPAPVPQSSTPFSSPQ) are disordered. The segment covering 536–546 (PQSSTPFSSPQ) has biased composition (polar residues).

In terms of assembly, interacts with DDB1 and CUL4A.

It participates in protein modification; protein ubiquitination. Functionally, may function as a substrate receptor for CUL4-DDB1 E3 ubiquitin-protein ligase complex. The sequence is that of DDB1- and CUL4-associated factor 11 (DCAF11) from Homo sapiens (Human).